Here is a 388-residue protein sequence, read N- to C-terminus: Sulfate adenylyltransferase (388 aa).

This sequence belongs to the sulfate adenylyltransferase family.

The enzyme catalyses sulfate + ATP + H(+) = adenosine 5'-phosphosulfate + diphosphate. Its pathway is sulfur metabolism; hydrogen sulfide biosynthesis; sulfite from sulfate: step 1/3. In Acaryochloris marina (strain MBIC 11017), this protein is Sulfate adenylyltransferase.